The chain runs to 222 residues: Collectrin (222 aa).

The first 14 residues, 1–14, serve as a signal peptide directing secretion; sequence MLWLLFFLVTAIHA. Topologically, residues 15–141 are extracellular; that stretch reads ELCQPGAENA…LAPPMDPSVP (127 aa). The Collectrin-like domain occupies 21 to 222; the sequence is AENAFKVRLS…MTEDERLTPL (202 aa). 2 N-linked (GlcNAc...) asparagine glycosylation sites follow: Asn-76 and Asn-93. Residues 142 to 162 traverse the membrane as a helical segment; the sequence is IWIIIFGVIFCIIIVAIALLI. Residues 163-222 lie on the Cytoplasmic side of the membrane; sequence LSGIWQRRRKNKEPSEVDDAEDKCENMITIENGIPSDPLDMKGGHINDAFMTEDERLTPL. A phosphothreonine mark is found at Thr-214 and Thr-220.

It belongs to the CLTRN family. Monomer. Homodimer; dimerization prevents CLTRN cleavage by BACE2. Interacts with SLC6A18; this interaction regulates the trafficking of SLC6A18 to the cell membrane and its amino acid transporter activity. Interacts with SLC6A19; this interaction regulates the trafficking of SLC6A19 to the cell membrane and its amino acid transporter activity. Interacts with SNAPIN. Post-translationally, glycosylated. Glycosylation is required for plasma membrane localization and for its cleavage by BACE2. Proteolytically processed in pancreatic beta cells by BACE2 leading to the generation and extracellular release of soluble CLTRN, and a corresponding cell-associated C-terminal fragment which is later cleaved by gamma-secretase. This shedding process inactivates CLTRN. Three cleavage sites have been identified for BACE2, two clustered sites after Phe-116 and Leu-118 and a more membrane proximal site at Phe-125; the preferred BACE2 cleavage site seems to be between Phe-125 and Leu-126, Phe-116 and Leu-118 act as alternative sites. Kidney; collecting ducts. Pancreas; beta cells of islets.

Its subcellular location is the cell membrane. Functionally, plays an important role in amino acid transport by acting as binding partner of amino acid transporters SLC6A18 and SLC6A19, regulating their trafficking on the cell surface and their amino acid transporter activity. May also play a role in trafficking of amino acid transporters SLC3A1 and SLC7A9 to the renal cortical cell membrane. Regulator of SNARE complex function. Stimulator of beta cell replication. This chain is Collectrin, found in Homo sapiens (Human).